Consider the following 547-residue polypeptide: Germacrene A synthase (547 aa).

Aspartate 300, aspartate 304, aspartate 443, and glutamate 451 together coordinate Mg(2+). The DDXXD motif signature appears at 300–304; the sequence is DDTYD.

It belongs to the terpene synthase family. Tpsa subfamily. Mg(2+) is required as a cofactor. Mn(2+) serves as cofactor. In terms of tissue distribution, expressed in leaves.

It is found in the plastid. Its subcellular location is the chloroplast. It carries out the reaction (2E,6E)-farnesyl diphosphate = germacrene A + diphosphate. The enzyme catalyses (2E,6E)-farnesyl diphosphate = (1S,2S,4R)-beta-elemene + diphosphate. It functions in the pathway secondary metabolite biosynthesis; terpenoid biosynthesis. Sesquiterpene synthase involved in the biosynthesis of volatile compounds widely used in aromatherapy and folk medicine, and present in culinary herbs. Mediates the conversion of (2E,6E)-farnesyl diphosphate (FPP) into germacrene A and beta-elemene. Not able to use (2E)-geranyl diphosphate (GPP) as substrate. This is Germacrene A synthase from Lavandula pedunculata subsp. lusitanica (French lavender).